Reading from the N-terminus, the 299-residue chain is ATP phosphoribosyltransferase (299 aa).

It belongs to the ATP phosphoribosyltransferase family. Long subfamily. In terms of assembly, equilibrium between an active dimeric form, an inactive hexameric form and higher aggregates. Interconversion between the various forms is largely reversible and is influenced by the natural substrates and inhibitors of the enzyme. It depends on Mg(2+) as a cofactor.

The protein resides in the cytoplasm. The catalysed reaction is 1-(5-phospho-beta-D-ribosyl)-ATP + diphosphate = 5-phospho-alpha-D-ribose 1-diphosphate + ATP. Its pathway is amino-acid biosynthesis; L-histidine biosynthesis; L-histidine from 5-phospho-alpha-D-ribose 1-diphosphate: step 1/9. With respect to regulation, feedback inhibited by histidine. In terms of biological role, catalyzes the condensation of ATP and 5-phosphoribose 1-diphosphate to form N'-(5'-phosphoribosyl)-ATP (PR-ATP). Has a crucial role in the pathway because the rate of histidine biosynthesis seems to be controlled primarily by regulation of HisG enzymatic activity. The chain is ATP phosphoribosyltransferase from Yersinia pseudotuberculosis serotype O:1b (strain IP 31758).